We begin with the raw amino-acid sequence, 39 residues long: Potassium channel toxin alpha-KTx 2.17 (39 aa).

Disulfide bonds link Cys-7–Cys-29, Cys-13–Cys-34, and Cys-17–Cys-36. An Isoleucine amide modification is found at Ile-39.

It belongs to the short scorpion toxin superfamily. Potassium channel inhibitor family. Alpha-KTx 02 subfamily. Expressed by the venom gland.

The protein resides in the secreted. In terms of biological role, blocks human voltage-gated potassium channels Kv1.1/KCNA1 (IC(50)=4.8 nM) and Kv1.2/KCNA2 (IC(50)=2.9 nM). In Centruroides tecomanus (Scorpion), this protein is Potassium channel toxin alpha-KTx 2.17.